Reading from the N-terminus, the 653-residue chain is Sulfate transporter 1.2 (653 aa).

Residues 1–30 are disordered; sequence MSSRAHPVDGSPATDGGHVPMKPSPTRHKV. At 1–91 the chain is on the cytoplasmic side; that stretch reads MSSRAHPVDG…GRNYTFKKFR (91 aa). The chain crosses the membrane as a helical span at residues 92-112; that stretch reads GDLISGLTIASLCIPQDIGYA. Residues 113-116 are Extracellular-facing; that stretch reads KLAN. Residues 117–137 traverse the membrane as a helical segment; that stretch reads LDPKYGLYSSFVPPLVYACMG. Residues 138-141 are Cytoplasmic-facing; that stretch reads SSRD. A helical membrane pass occupies residues 142–162; the sequence is IAIGPVAVVSLLLGTLLRAEI. At 163–173 the chain is on the extracellular side; it reads DPNTSPDEYLR. The next 2 membrane-spanning stretches (helical) occupy residues 174–194 and 195–215; these read LAFT…FFRL and GFLI…GAAI. Residues 216-253 are Extracellular-facing; that stretch reads TIALQQLKGFLGIKKFTKKTDIISVLESVFKAAHHGWN. A helical membrane pass occupies residues 254–274; that stretch reads WQTILIGASFLTFLLTSKIIG. Residues 275–280 are Cytoplasmic-facing; the sequence is KKSKKL. Residues 281–301 form a helical membrane-spanning segment; sequence FWVPAIAPLISVIVSTFFVYI. At 302-339 the chain is on the extracellular side; sequence TRADKQGVQIVKHLDQGINPSSFHLIYFTGDNLAKGIR. A helical membrane pass occupies residues 340 to 360; it reads IGVVAGMVALTEAVAIGRTFA. Residues 361 to 372 lie on the Cytoplasmic side of the membrane; that stretch reads AMKDYQIDGNKE. A helical transmembrane segment spans residues 373-393; that stretch reads MVALGMMNVVGSMSSCYVATG. Residues 394 to 409 lie on the Extracellular side of the membrane; it reads SFSRSAVNFMAGCQTA. Residues 410 to 430 traverse the membrane as a helical segment; sequence VSNIIMSIVVLLTLLFLTPLF. Topologically, residues 431 to 438 are cytoplasmic; sequence KYTPNAIL. A helical transmembrane segment spans residues 439–459; it reads AAIIINAVIPLIDIQAAILIF. Over 460-466 the chain is Extracellular; the sequence is KVDKLDF. Residues 467 to 487 form a helical membrane-spanning segment; it reads IACIGAFFGVIFVSVEIGLLI. Over 488-653 the chain is Cytoplasmic; that stretch reads AVSISFAKIL…ACCPKLSNEV (166 aa). The region spanning 522–645 is the STAS domain; it reads QYPEATMVPG…LTVADAVEAC (124 aa).

Belongs to the SLC26A/SulP transporter (TC 2.A.53.1) family. Homodimer. Interacts with OASA1 through its STAS domain. As to expression, expressed in lateral root cap, root hairs, epidermal and cortical cells of roots.

It localises to the cell membrane. Interaction with OASA1 negatively impacts the transporter activity. In terms of biological role, high-affinity H(+)/sulfate cotransporter that mediates the uptake of the environmental sulfate by plant roots. Plays a central role in the regulation of sulfate assimilation. Unable to transport molybdate. The protein is Sulfate transporter 1.2 (SULTR1;2) of Arabidopsis thaliana (Mouse-ear cress).